Reading from the N-terminus, the 155-residue chain is Small ribosomal subunit protein uS7c (155 aa).

This sequence belongs to the universal ribosomal protein uS7 family. As to quaternary structure, part of the 30S ribosomal subunit.

Its subcellular location is the plastid. The protein resides in the chloroplast. In terms of biological role, one of the primary rRNA binding proteins, it binds directly to 16S rRNA where it nucleates assembly of the head domain of the 30S subunit. The polypeptide is Small ribosomal subunit protein uS7c (rps7) (Cedrus deodara (Deodar cedar)).